The following is a 309-amino-acid chain: Ribonuclease Z (309 aa).

Residues His63, His65, Asp67, His68, His141, Asp212, and His270 each contribute to the Zn(2+) site. Residue Asp67 is the Proton acceptor of the active site.

This sequence belongs to the RNase Z family. In terms of assembly, homodimer. The cofactor is Zn(2+).

The enzyme catalyses Endonucleolytic cleavage of RNA, removing extra 3' nucleotides from tRNA precursor, generating 3' termini of tRNAs. A 3'-hydroxy group is left at the tRNA terminus and a 5'-phosphoryl group is left at the trailer molecule.. Its function is as follows. Zinc phosphodiesterase, which displays some tRNA 3'-processing endonuclease activity. Probably involved in tRNA maturation, by removing a 3'-trailer from precursor tRNA. The polypeptide is Ribonuclease Z (Lactobacillus johnsonii (strain CNCM I-12250 / La1 / NCC 533)).